A 326-amino-acid chain; its full sequence is Peroxidase 6 (326 aa).

An N-terminal signal peptide occupies residues 1 to 20 (MKSFGLCLFILVSSPCLLQA). Asparagine 21 is a glycosylation site (N-linked (GlcNAc...) asparagine). Disulfide bonds link cysteine 31-cysteine 112, cysteine 64-cysteine 69, cysteine 118-cysteine 318, and cysteine 197-cysteine 228. The active-site Proton acceptor is the histidine 62. Aspartate 63, valine 66, glycine 68, aspartate 70, and serine 72 together coordinate Ca(2+). N-linked (GlcNAc...) asparagine glycosylation is present at asparagine 163. Histidine 190 provides a ligand contact to heme b. Threonine 191 contacts Ca(2+). N-linked (GlcNAc...) asparagine glycans are attached at residues asparagine 206 and asparagine 230. Positions 242, 245, and 250 each coordinate Ca(2+). An N-linked (GlcNAc...) asparagine glycan is attached at asparagine 274.

Belongs to the peroxidase family. Classical plant (class III) peroxidase subfamily. The cofactor is heme b. Requires Ca(2+) as cofactor.

Its subcellular location is the secreted. It catalyses the reaction 2 a phenolic donor + H2O2 = 2 a phenolic radical donor + 2 H2O. Its function is as follows. Removal of H(2)O(2), oxidation of toxic reductants, biosynthesis and degradation of lignin, suberization, auxin catabolism, response to environmental stresses such as wounding, pathogen attack and oxidative stress. These functions might be dependent on each isozyme/isoform in each plant tissue. The protein is Peroxidase 6 (PER6) of Arabidopsis thaliana (Mouse-ear cress).